Reading from the N-terminus, the 279-residue chain is Dermonecrotic toxin LspiSicTox-betaIE3ii (279 aa).

H5 is an active-site residue. Residues E25 and D27 each coordinate Mg(2+). H41 serves as the catalytic Nucleophile. 2 disulfide bridges follow: C45-C51 and C47-C190. D85 is a binding site for Mg(2+).

Belongs to the arthropod phospholipase D family. Class II subfamily. It depends on Mg(2+) as a cofactor. As to expression, expressed by the venom gland.

The protein localises to the secreted. The enzyme catalyses an N-(acyl)-sphingosylphosphocholine = an N-(acyl)-sphingosyl-1,3-cyclic phosphate + choline. It carries out the reaction an N-(acyl)-sphingosylphosphoethanolamine = an N-(acyl)-sphingosyl-1,3-cyclic phosphate + ethanolamine. It catalyses the reaction a 1-acyl-sn-glycero-3-phosphocholine = a 1-acyl-sn-glycero-2,3-cyclic phosphate + choline. The catalysed reaction is a 1-acyl-sn-glycero-3-phosphoethanolamine = a 1-acyl-sn-glycero-2,3-cyclic phosphate + ethanolamine. In terms of biological role, dermonecrotic toxins cleave the phosphodiester linkage between the phosphate and headgroup of certain phospholipids (sphingolipid and lysolipid substrates), forming an alcohol (often choline) and a cyclic phosphate. This toxin acts on sphingomyelin (SM). It may also act on ceramide phosphoethanolamine (CPE), lysophosphatidylcholine (LPC) and lysophosphatidylethanolamine (LPE), but not on lysophosphatidylserine (LPS), and lysophosphatidylglycerol (LPG). It acts by transphosphatidylation, releasing exclusively cyclic phosphate products as second products. Induces dermonecrosis, hemolysis, increased vascular permeability, edema, inflammatory response, and platelet aggregation. This chain is Dermonecrotic toxin LspiSicTox-betaIE3ii, found in Loxosceles spinulosa (Recluse spider).